A 354-amino-acid chain; its full sequence is Ion-translocating oxidoreductase complex subunit D (354 aa).

Transmembrane regions (helical) follow at residues 9–28 (IMLH…LYLF), 67–87 (LLSG…WIAV), and 117–137 (VALL…LPLG). Residue threonine 165 is modified to FMN phosphoryl threonine. Helical transmembrane passes span 200–220 (GSLG…LLAL), 222–242 (IIHW…AALA), 249–269 (VHGG…ALFI), 277–297 (PISR…VFVI), and 301–321 (GNFP…VPLI).

The protein belongs to the NqrB/RnfD family. In terms of assembly, the complex is composed of six subunits: RnfA, RnfB, RnfC, RnfD, RnfE and RnfG. The cofactor is FMN.

The protein resides in the cell inner membrane. Functionally, part of a membrane-bound complex that couples electron transfer with translocation of ions across the membrane. The protein is Ion-translocating oxidoreductase complex subunit D of Stutzerimonas stutzeri (Pseudomonas stutzeri).